The primary structure comprises 278 residues: Ferredoxin--NADP reductase A (278 aa).

Residues 3 to 103 form the FAD-binding FR-type domain; that stretch reads PGYTEETVLE…KRATGTLTIG (101 aa). FAD is bound by residues 52–55 and T118; that span reads RAYS.

This sequence belongs to the ferredoxin--NADP reductase type 1 family. FAD is required as a cofactor.

It catalyses the reaction 2 reduced [4Fe-4S]-[ferredoxin] + NADP(+) + H(+) = 2 oxidized [4Fe-4S]-[ferredoxin] + NADPH. Transports electrons between NADPH and ferredoxin. Can transfer electrons to ferredoxins Fdx2 and Fdx8. Prefers NADPH to NADH. This Sorangium cellulosum (strain So ce56) (Polyangium cellulosum (strain So ce56)) protein is Ferredoxin--NADP reductase A.